The following is a 414-amino-acid chain: Histidine--tRNA ligase (414 aa).

The protein belongs to the class-II aminoacyl-tRNA synthetase family. Homodimer.

The protein localises to the cytoplasm. The catalysed reaction is tRNA(His) + L-histidine + ATP = L-histidyl-tRNA(His) + AMP + diphosphate + H(+). The protein is Histidine--tRNA ligase of Anaeromyxobacter dehalogenans (strain 2CP-1 / ATCC BAA-258).